Reading from the N-terminus, the 5588-residue chain is Histone-lysine N-methyltransferase 2D (5588 aa).

Residues 1–61 (MDSQKPPAED…QKPPHDCSRG (61 aa)) are disordered. Residues 104-149 (GPCEAVLPKEDASQIGFPEGLTPAHLGEPGGHCWAHHWCAAWSAGV) form a C2HC pre-PHD-type 1; degenerate zinc finger. 2 PHD-type zinc fingers span residues 170 to 218 (QRCS…PEHS) and 270 to 323 (CPEC…CRLC). The PHD-type 2; degenerate zinc-finger motif lies at 226–276 (EARCAVCEGPGQLCDLLFCTSCGHHYHGACLDTALTARKRASWQCPECKVC). The RING-type 1; atypical zinc finger occupies 229–274 (CAVCEGPGQLCDLLFCTSCGHHYHGACLDTALTARKRASWQCPECK). The segment at 276–321 (CQSCRKPGNDSKMLVCETCDKGYHTFCLKPPMEDLPAHSWKCKTCR) adopts an RING-type 2; degenerate zinc-finger fold. 2 disordered regions span residues 438-908 (MPLL…SPII) and 922-1315 (LEYP…DDDT). The 15 X 5 AA repeats of S/P-P-P-E/P-E/A stretch occupies residues 439–642 (PLLPPPEESP…VSRLSPPPEE (204 aa)). The segment covering 440-463 (LLPPPEESPLSPPPEESPTSPPPE) has biased composition (pro residues). 4 consecutive repeat copies span residues 442-446 (PPPEE), 460-464 (PPPEA), 469-473 (PPTEE), and 477-481 (SPPPE). A compositionally biased stretch (low complexity) spans 464–475 (ASRLSPPTEESP). Pro residues-rich tracts occupy residues 490–512 (GCPPSPALDTPLSPPPEASPLSP) and 519–560 (LSPP…PPPE). 4 consecutive repeat copies span residues 520–524 (SPPPE), 529–533 (SPPPE), 538–542 (SPPPE), and 547–551 (SPPPE). Residues 561–572 (ASRLFPPFEESP) are compositionally biased toward low complexity. Positions 573 to 614 (LSPPPEDSPLSPPPEASRLSPPPEDSPMSPPPEDSPMSPPPE) are enriched in pro residues. 4 repeat units span residues 574–578 (SPPPE), 583–587 (SPPPE), 592–596 (SPPPE), and 610–614 (SPPPE). Positions 619–636 (LPLPVLSHLSPLPEVSRL) are enriched in low complexity. Copy 15 of the repeat occupies 637–641 (SPPPE). Pro residues predominate over residues 637-677 (SPPPEESPLSPPPEDSPASPPPEASRLSPPPEDSPASPPPE). Over residues 696 to 712 (DSLVSLPMEESPLSPLP) the composition is skewed to low complexity. S727 carries the phosphoserine modification. Low complexity-rich tracts occupy residues 735–755 (LCPQPEELPLSPQSEEPCLSP), 836–851 (PSQSSAPKELSLFSPS), and 876–893 (LPEELPLSLSGEPVLSPQ). Composition is skewed to pro residues over residues 894-908 (LMPPDPLPPPLSPII), 959-973 (EPVPPMILPPSPGSP), and 985-1012 (LPPPCSPLLPHSLPPPTPPPSHCSPPAL). Residues 1013–1023 (PLSVPSPLSPV) show a composition bias toward low complexity. The span at 1033–1045 (AELHEMETDKGPE) shows a compositional bias: basic and acidic residues. 3 consecutive PHD-type zinc fingers follow at residues 1071–1124 (PSPA…PMEV), 1121–1171 (PMEV…SQGD), and 1198–1253 (LGVS…SPAR). Residue S1107 is modified to Phosphoserine. The span at 1163–1172 (EISNLSQGDA) shows a compositional bias: polar residues. Residues 1201–1251 (STDVSPARDEGSLRLCTDSLPETDDSLLCDTGTATSGGKAEGDKGRRRSSP) form an RING-type 3; atypical zinc finger. Residue S1205 is modified to Phosphoserine. Residue T1223 is modified to Phosphothreonine. S1226 carries the post-translational modification Phosphoserine. Positions 1245 to 1258 (GRRRSSPARSRIKQ) are enriched in basic residues. Position 1562 is a phosphoserine (S1562). Disordered stretches follow at residues 1566–1721 (KRRQ…SKLE), 1751–1846 (GRPG…MESK), 1886–1962 (GLAL…SLQR), and 2095–2641 (SADG…QRQR). Basic and acidic residues predominate over residues 1593–1608 (PDDKKDGDLDTDDLLK). Residue S1627 is modified to Phosphoserine. Basic and acidic residues predominate over residues 1631-1641 (ELGKEETEESK). Composition is skewed to basic residues over residues 1658-1668 (RQRKSHTRVKR) and 1709-1718 (KQQRRARKKS). The segment covering 1762–1782 (PRADGGSDRKELMTAMHKGDD) has biased composition (basic and acidic residues). S1791 is subject to Phosphoserine. Residue T1822 is modified to Phosphothreonine. Positions 1831 to 1846 (DLDRIPTEELPKMESK) are enriched in basic and acidic residues. Low complexity-rich tracts occupy residues 1886–1896 (GLALGSLPSSS) and 1936–1947 (TTPSTPTTPTTE). Residues 2151-2166 (PTYPPYPSPTGAPAQP) are compositionally biased toward pro residues. A compositionally biased stretch (low complexity) spans 2170 to 2181 (GTTTRPGTGQPG). Phosphoserine is present on S2196. The residue at position 2197 (T2197) is a Phosphothreonine. K2203 bears the N6-acetyllysine mark. Residues S2217 and S2231 each carry the phosphoserine modification. A compositionally biased stretch (basic and acidic residues) spans 2237-2249 (ESRKSLEVKKEEL). Phosphoserine is present on residues S2266, S2268, and S2299. Pro residues-rich tracts occupy residues 2308–2322 (EPPPAQALAPSPPSH) and 2331–2359 (YPDPYAQPPLTPRPQPPPPESCCAPPPRS). The span at 2366-2388 (SRVPASPQSQSSSQSPLTPRPLS) shows a compositional bias: low complexity. Residues 2470 to 2486 (GQPTNFARSPGTGTFVG) show a composition bias toward polar residues. Residue R2492 is modified to Asymmetric dimethylarginine. The segment covering 2504–2514 (LKPPVPQPGLP) has biased composition (pro residues). Low complexity predominate over residues 2546-2557 (PSGSPLGPNSGP). S2597 is subject to Phosphoserine. Residues 2610–2622 (SSSSLATPELSSA) show a composition bias toward low complexity. The stretch at 2627–2665 (ISSLSQTELEKQRQRQRLRELLIRQQIQRNTLRQEKETA) forms a coiled coil. Residues 2644–2648 (LRELL) carry the LXXLL motif 1 motif. Residues 2655 to 2806 (RNTLRQEKET…QLWQQQQQQQ (152 aa)) are disordered. Low complexity predominate over residues 2665-2680 (AAAAAGAVGPPGNWGA). Polar residues-rich tracts occupy residues 2691-2704 (SRGQTPFTGSQDRS) and 2739-2748 (PSSMDMNSRQ). The stretch at 2768 to 2813 (LQQQQQQQQQQQQQQQQQQQQQQQQQQQQQLWQQQQQQQQQQQQQA) forms a coiled coil. A compositionally biased stretch (low complexity) spans 2769 to 2806 (QQQQQQQQQQQQQQQQQQQQQQQQQQQQQLWQQQQQQQ). R2829 carries the asymmetric dimethylarginine modification. An LXXLL motif 2 motif is present at residues 3030 to 3034 (LDDLL). The segment at 3069-3104 (NEKAEREALLRGVEPVSLGPEERPPPAPDNSEPRLT) is disordered. Residue K3071 is modified to N6-acetyllysine. Residues S3122 and S3193 each carry the phosphoserine modification. Disordered stretches follow at residues 3129-3193 (NTPK…LNPS) and 3271-3326 (QQQQ…QSMV). A compositionally biased stretch (low complexity) spans 3271–3284 (QQQQQQQQQQQQQQ). K3430 is subject to N6-acetyllysine. Disordered stretches follow at residues 3460-3496 (SGGSGSDLQNHVAPGSGQERNAGDPAQPRPNPPTFAQ), 3593-3617 (RNKQQQQQQQQQQQQQQQHSAVLAV), 3633-3661 (LLPAHGLQPPQAPPGGQAGGLRLPPGGMV), and 3678-3704 (QQQQQHSGVAGSLTGPPGSFFPGNLAL). Residues 3559-3613 (EKLKLVTEQQSKIQKQLDQVRKQQKEHTNLMAEYRNKQQQQQQQQQQQQQQQHSA) are a coiled coil. The span at 3596 to 3610 (QQQQQQQQQQQQQQQ) shows a compositional bias: low complexity. Residues 3712-3747 (RLLQERQLQLQQQRMQLAQKLQQQQQQQQQQQQQQH) adopt a coiled-coil conformation. Residue R3725 is modified to Asymmetric dimethylarginine. Disordered regions lie at residues 3760 to 3780 (PGVQNQALGPKPQGLLPPSNH) and 3808 to 3827 (LQQQQQQQQHSGALGPQGPH). Coiled coils occupy residues 3854 to 3883 (RLLTAQQQQQQQQQQQQQQQQQQQQQQQQQ) and 3912 to 4052 (SLQQ…QVTL). The disordered stretch occupies residues 4053–4249 (GPGLPVKPLQ…QGPPGAGVMP (197 aa)). 3 stretches are compositionally biased toward low complexity: residues 4128 to 4159 (SQLLLVQSQAQSQATSVQLQPPLRLPGQPQPQ), 4172 to 4183 (GQQLGSGSSSES), and 4226 to 4240 (GSQPPKSGPAPQSGQ). Residue R4255 is modified to Asymmetric dimethylarginine. Residue S4272 is modified to Phosphoserine. Residues 4279-4283 (LQALL) carry the LXXLL motif 3 motif. Residues 4290–4452 (QSQAVRQTPP…SSLVPGHLDQ (163 aa)) form a disordered region. Residues 4294-4305 (VRQTPPFQEPGT) are compositionally biased toward polar residues. Residues 4307 to 4322 (PSPLQGLLGCQPQPGG) are compositionally biased toward low complexity. The LXXLL motif 4 signature appears at 4310-4314 (LQGLL). A compositionally biased stretch (polar residues) spans 4379–4391 (QLPSPSAQLTPTH). S4410 carries the post-translational modification Phosphoserine. Positions 4432-4445 (DNLTEAQKPEQSSL) are enriched in polar residues. An LXXLL motif 5 motif is present at residues 4514-4518 (LQKLL). K4516 bears the N6-acetyllysine mark. 3 disordered regions span residues 4553 to 4596 (LQGT…EDGV), 4664 to 4716 (KNNL…EGAL), and 4729 to 4778 (AALP…QLGS). Over residues 4670-4684 (PPTPPSSLPPTPPPS) the composition is skewed to pro residues. A Phosphoserine modification is found at S4789. A Glycyl lysine isopeptide (Lys-Gly) (interchain with G-Cter in SUMO2) cross-link involves residue K4807. An N6-acetyllysine modification is found at K4827. The RING-type 4; degenerate zinc finger occupies 4829 to 4874 (KGSEVSVMLTVSAAAAKNLNGVMVAVAELLSMKIPNSYEVLFPDGP). The interval 4877–4908 (AGLEPKKGEAEGPGGKEKGLSGKGPDTGPDWL) is disordered. The span at 4879–4896 (LEPKKGEAEGPGGKEKGL) shows a compositional bias: basic and acidic residues. K4931 participates in a covalent cross-link: Glycyl lysine isopeptide (Lys-Gly) (interchain with G-Cter in SUMO2). Positions 4956–5031 (QLSAPPPEEP…SEDSRPPRLK (76 aa)) are disordered. Residues 4959-4982 (APPPEEPSPPPSPLAPSPASPPAE) are compositionally biased toward pro residues. The segment covering 5017-5027 (RPPEESEDSRP) has biased composition (basic and acidic residues). Positions 5041–5045 (LRLLL) match the LXXLL motif 6 motif. The C2HC pre-PHD-type 2 zinc finger occupies 5080–5120 (NRRCCFCHEEGDGATDGPARLLNLDLDLWVHLNCALWSTEV). The PHD-type 7 zinc finger occupies 5141–5188 (TKCSLCQRTGATSSCNRMRCPNVYHFACAIRAKCMFFKDKTMLCPVHK). The 61-residue stretch at 5226-5286 (LHMFRVGGLV…CCYRCSISEN (61 aa)) folds into the FYR N-terminal domain. The 86-residue stretch at 5287 to 5372 (NGRPEFVIKV…ESCQNYLFRY (86 aa)) folds into the FYR C-terminal domain. Residues 5388-5393 (GCARSE) carry the WDR5 interaction motif (WIN) motif. The SET domain occupies 5448 to 5564 (NNVYLARSRI…KGEELTYDYQ (117 aa)). S-adenosyl-L-methionine-binding positions include Y5502 and 5525–5526 (NH). 4 residues coordinate Zn(2+): C5528, C5576, C5578, and C5583. A Post-SET domain is found at 5572–5588 (HKIPCHCGAWNCRKWMN).

It belongs to the class V-like SAM-binding methyltransferase superfamily. Histone-lysine methyltransferase family. TRX/MLL subfamily. As to quaternary structure, component of the MLL2 complex (also named ASCOM complex), at least composed of catalytic subunit KMT2D/MLL2, ASH2L, RBBP5, WDR5, NCOA6, DPY30, KDM6A, PAXIP1/PTIP, PAGR1 and alpha- and beta-tubulin. Forms a core complex with the evolutionary conserved subcomplex WRAD composed of WDR5, RBBP5, ASH2L/ASH2 and DPY30 subunits; WRAD differentially stimulates the methyltransferase activity. Interacts with ESR1; interaction is direct. Interacts (via WIN motif) with WDR5.

Its subcellular location is the nucleus. The catalysed reaction is L-lysyl(4)-[histone H3] + S-adenosyl-L-methionine = N(6)-methyl-L-lysyl(4)-[histone H3] + S-adenosyl-L-homocysteine + H(+). In terms of biological role, histone methyltransferase that catalyzes methyl group transfer from S-adenosyl-L-methionine to the epsilon-amino group of 'Lys-4' of histone H3 (H3K4). Part of chromatin remodeling machinery predominantly forms H3K4me1 methylation marks at active chromatin sites where transcription and DNA repair take place. Acts as a coactivator for estrogen receptor by being recruited by ESR1, thereby activating transcription. The chain is Histone-lysine N-methyltransferase 2D (Kmt2d) from Mus musculus (Mouse).